A 123-amino-acid polypeptide reads, in one-letter code: Small ribosomal subunit protein uS12 (123 aa).

At aspartate 89 the chain carries 3-methylthioaspartic acid.

This sequence belongs to the universal ribosomal protein uS12 family. As to quaternary structure, part of the 30S ribosomal subunit. Contacts proteins S8 and S17. May interact with IF1 in the 30S initiation complex.

With S4 and S5 plays an important role in translational accuracy. In terms of biological role, interacts with and stabilizes bases of the 16S rRNA that are involved in tRNA selection in the A site and with the mRNA backbone. Located at the interface of the 30S and 50S subunits, it traverses the body of the 30S subunit contacting proteins on the other side and probably holding the rRNA structure together. The combined cluster of proteins S8, S12 and S17 appears to hold together the shoulder and platform of the 30S subunit. The protein is Small ribosomal subunit protein uS12 of Geobacter metallireducens (strain ATCC 53774 / DSM 7210 / GS-15).